The chain runs to 358 residues: Peptide chain release factor 1 (358 aa).

An N5-methylglutamine modification is found at Gln-237.

The protein belongs to the prokaryotic/mitochondrial release factor family. Methylated by PrmC. Methylation increases the termination efficiency of RF1.

It localises to the cytoplasm. Peptide chain release factor 1 directs the termination of translation in response to the peptide chain termination codons UAG and UAA. This Streptomyces coelicolor (strain ATCC BAA-471 / A3(2) / M145) protein is Peptide chain release factor 1.